A 570-amino-acid polypeptide reads, in one-letter code: Rqc2 homolog RqcH (570 aa).

The tract at residues 1–173 (MSFDGMFTYG…LPPAQDKISP (173 aa)) is NFACT-N domain. The tract at residues 179–281 (DDILRHLSFQ…ELLDRFYFGK (103 aa)) is hhH domain. 2 coiled-coil regions span residues 279-336 (FGKA…TANL) and 368-430 (TPSE…VEGK). The tract at residues 282–434 (AERDRVKQQA…ELVEGKYLRP (153 aa)) is coiled-coil-M (CCM). An NFACT-R region spans residues 446–570 (HNPVLETYES…ADTVIKLKKS (125 aa)).

This sequence belongs to the NEMF family. As to quaternary structure, associates with isolated or stalled 50S ribosomal subunits. Binds to RqcP. Interacts with ribosomal protein uL11. Displaced from the 50S subunit by thiostrepton. In crystallized 50S subunits RqcH is variously associated with A/P-site tRNA, P-site tRNA and RqcP, an E-site tRNA or A- and P-site tRNAs and RqcP2(YlmH).

Its function is as follows. Key component of the ribosome quality control system (RQC), a ribosome-associated complex that mediates the extraction of incompletely synthesized nascent chains from stalled ribosomes and their subsequent degradation. RqcH recruits Ala-charged tRNA, and with RqcP directs the elongation of stalled nascent chains on 50S ribosomal subunits, leading to non-templated C-terminal alanine extensions (Ala tail). The Ala tail promotes nascent chain degradation. RqcH, RqcP and charged tRNA(Ala) are necessary and sufficient to add an Ala tail to a model stalled nascent peptide; does not add Val. Binds the P-site tRNA in 50S ribosomal subunit, unwinds the anticodon stem and interacts with the splayed anticodon. Selectively binds tRNA(Ala) isoacceptors, even in the absence of the 50S ribosomal subunit. Adds between 1 and at least 8 Ala residues to the nascent chain; detection of the Ala tail requires either deletion of clpP or its inhibition. Binds to 50S ribosomal subunits, at least 30% of which contain a P-site tRNA and thus are obstructed. This is Rqc2 homolog RqcH from Bacillus subtilis (strain 168).